The primary structure comprises 426 residues: Serine hydroxymethyltransferase 1 (426 aa).

(6S)-5,6,7,8-tetrahydrofolate-binding positions include leucine 121 and glycine 125–leucine 127. At lysine 230 the chain carries N6-(pyridoxal phosphate)lysine. Serine 355–phenylalanine 357 is a (6S)-5,6,7,8-tetrahydrofolate binding site.

The protein belongs to the SHMT family. As to quaternary structure, homodimer. It depends on pyridoxal 5'-phosphate as a cofactor.

The protein localises to the cytoplasm. It carries out the reaction (6R)-5,10-methylene-5,6,7,8-tetrahydrofolate + glycine + H2O = (6S)-5,6,7,8-tetrahydrofolate + L-serine. It participates in one-carbon metabolism; tetrahydrofolate interconversion. It functions in the pathway amino-acid biosynthesis; glycine biosynthesis; glycine from L-serine: step 1/1. In terms of biological role, catalyzes the reversible interconversion of serine and glycine with tetrahydrofolate (THF) serving as the one-carbon carrier. This reaction serves as the major source of one-carbon groups required for the biosynthesis of purines, thymidylate, methionine, and other important biomolecules. Also exhibits THF-independent aldolase activity toward beta-hydroxyamino acids, producing glycine and aldehydes, via a retro-aldol mechanism. This Hahella chejuensis (strain KCTC 2396) protein is Serine hydroxymethyltransferase 1.